Reading from the N-terminus, the 256-residue chain is 5'-nucleotidase SurE (256 aa).

4 residues coordinate a divalent metal cation: Asp8, Asp9, Ser39, and Asn95.

This sequence belongs to the SurE nucleotidase family. Requires a divalent metal cation as cofactor.

Its subcellular location is the cytoplasm. The enzyme catalyses a ribonucleoside 5'-phosphate + H2O = a ribonucleoside + phosphate. Its function is as follows. Nucleotidase that shows phosphatase activity on nucleoside 5'-monophosphates. The polypeptide is 5'-nucleotidase SurE (Methanosphaera stadtmanae (strain ATCC 43021 / DSM 3091 / JCM 11832 / MCB-3)).